We begin with the raw amino-acid sequence, 215 residues long: MNQSILSPFGNTAEERVLNAINAFKNGTGVLVLDDEDRENEGDLIFPAETITPEQMAKLIRYGSGIVCLCITDERCQQLDLPSMVEHNNSVNKTAFTVTIEAAKGVSTGVSAADRVTTIQTAIADNAVPTDLHRPGHVFPLRAVNGGVLTRRGHTEASVDLARLAGFKEAGVICEITNDDGTMARTPDIVEFAKKFGYSVLTIEDLVEYRLANNI.

D-ribulose 5-phosphate is bound by residues 38-39 (RE), Asp-43, 151-155 (RRGHT), and Glu-175. Glu-39 serves as a coordination point for Mg(2+). A Mg(2+)-binding site is contributed by His-154.

This sequence belongs to the DHBP synthase family. In terms of assembly, homodimer. Mg(2+) serves as cofactor. It depends on Mn(2+) as a cofactor.

It carries out the reaction D-ribulose 5-phosphate = (2S)-2-hydroxy-3-oxobutyl phosphate + formate + H(+). It functions in the pathway cofactor biosynthesis; riboflavin biosynthesis; 2-hydroxy-3-oxobutyl phosphate from D-ribulose 5-phosphate: step 1/1. In terms of biological role, catalyzes the conversion of D-ribulose 5-phosphate to formate and 3,4-dihydroxy-2-butanone 4-phosphate. The sequence is that of 3,4-dihydroxy-2-butanone 4-phosphate synthase from Haemophilus influenzae (strain PittGG).